The following is a 162-amino-acid chain: Dihydrofolate reductase (162 aa).

Residues 3–161 form the DHFR domain; sequence KITIIAACAE…VAYTFVHYLG (159 aa). 7–9 contacts substrate; sequence IAA. NADP(+)-binding positions include 8–9 and 16–21; these read AA and IGAGNA. Residue Asp29 participates in substrate binding. Residue 45 to 48 participates in NADP(+) binding; the sequence is GRKT. A substrate-binding site is contributed by Arg60. NADP(+) is bound by residues 65-68 and 98-103; these read ISRQ and MGGAQI. Substrate is bound at residue Thr117.

The protein belongs to the dihydrofolate reductase family.

The catalysed reaction is (6S)-5,6,7,8-tetrahydrofolate + NADP(+) = 7,8-dihydrofolate + NADPH + H(+). Its pathway is cofactor biosynthesis; tetrahydrofolate biosynthesis; 5,6,7,8-tetrahydrofolate from 7,8-dihydrofolate: step 1/1. In terms of biological role, key enzyme in folate metabolism. Catalyzes an essential reaction for de novo glycine and purine synthesis, and for DNA precursor synthesis. This is Dihydrofolate reductase (folA) from Neisseria gonorrhoeae.